Reading from the N-terminus, the 64-residue chain is Alpha-conotoxin-like Lp1.8 (64 aa).

Residues 1 to 21 (MGMRMMFTMFLLVVLTTTVVS) form the signal peptide. A propeptide spanning residues 22–41 (FNSDRESNHENRRTSNQITR) is cleaved from the precursor. 2 cysteine pairs are disulfide-bonded: Cys47/Cys53 and Cys48/Cys61. Positions 49-51 (KDP) are lacks the Ser-Xaa-Pro motif that is crucial for potent interaction with nAChR.

The protein belongs to the conotoxin A superfamily. Expressed by the venom duct.

The protein resides in the secreted. Its function is as follows. Alpha-conotoxins act on postsynaptic membranes, they bind to the nicotinic acetylcholine receptors (nAChR) and thus inhibit them. Has possibly a distinct nAChR binding mode from other alpha-conotoxins, due to a different three residue motif (Lys-Xaa-Pro instead of the conserved Ser-Xaa-Pro motif). The sequence is that of Alpha-conotoxin-like Lp1.8 from Conus leopardus (Leopard cone).